A 220-amino-acid polypeptide reads, in one-letter code: Pyridoxine/pyridoxamine 5'-phosphate oxidase (220 aa).

Residues 69–74 (RVVLLK), 84–85 (YT), Arg90, Lys91, and Gln113 each bind FMN. Substrate is bound at residue Lys74. Substrate contacts are provided by Tyr131, Arg135, and Ser139. Residues 148-149 (QS) and Trp193 contribute to the FMN site. 199–201 (RLH) is a binding site for substrate. Arg203 lines the FMN pocket.

This sequence belongs to the pyridoxamine 5'-phosphate oxidase family. As to quaternary structure, homodimer. Requires FMN as cofactor.

The enzyme catalyses pyridoxamine 5'-phosphate + O2 + H2O = pyridoxal 5'-phosphate + H2O2 + NH4(+). The catalysed reaction is pyridoxine 5'-phosphate + O2 = pyridoxal 5'-phosphate + H2O2. It participates in cofactor metabolism; pyridoxal 5'-phosphate salvage; pyridoxal 5'-phosphate from pyridoxamine 5'-phosphate: step 1/1. Its pathway is cofactor metabolism; pyridoxal 5'-phosphate salvage; pyridoxal 5'-phosphate from pyridoxine 5'-phosphate: step 1/1. Catalyzes the oxidation of either pyridoxine 5'-phosphate (PNP) or pyridoxamine 5'-phosphate (PMP) into pyridoxal 5'-phosphate (PLP). The polypeptide is Pyridoxine/pyridoxamine 5'-phosphate oxidase (Myxococcus xanthus).